A 373-amino-acid chain; its full sequence is Chaperone protein DnaJ (373 aa).

The region spanning 5 to 70 (DFYATLGVAR…EKRAMYDQYG (66 aa)) is the J domain. The CR-type zinc finger occupies 134-212 (GVKKRINIPT…CRGAGRNKAV (79 aa)). The Zn(2+) site is built by cysteine 147, cysteine 150, cysteine 164, cysteine 167, cysteine 186, cysteine 189, cysteine 200, and cysteine 203. CXXCXGXG motif repeat units lie at residues 147–154 (CDVCNGSG), 164–171 (CPTCKGSG), 186–193 (CPTCHGAG), and 200–207 (CVKCRGAG).

It belongs to the DnaJ family. As to quaternary structure, homodimer. Requires Zn(2+) as cofactor.

Its subcellular location is the cytoplasm. Its function is as follows. Participates actively in the response to hyperosmotic and heat shock by preventing the aggregation of stress-denatured proteins and by disaggregating proteins, also in an autonomous, DnaK-independent fashion. Unfolded proteins bind initially to DnaJ; upon interaction with the DnaJ-bound protein, DnaK hydrolyzes its bound ATP, resulting in the formation of a stable complex. GrpE releases ADP from DnaK; ATP binding to DnaK triggers the release of the substrate protein, thus completing the reaction cycle. Several rounds of ATP-dependent interactions between DnaJ, DnaK and GrpE are required for fully efficient folding. Also involved, together with DnaK and GrpE, in the DNA replication of plasmids through activation of initiation proteins. This chain is Chaperone protein DnaJ, found in Neisseria meningitidis serogroup C (strain 053442).